We begin with the raw amino-acid sequence, 332 residues long: 4-hydroxyproline 2-epimerase 2 (332 aa).

The active-site Proton acceptor is cysteine 89. Residues histidine 222, aspartate 248, and 253-254 (GT) each bind substrate.

This sequence belongs to the proline racemase family.

It carries out the reaction trans-4-hydroxy-L-proline = cis-4-hydroxy-D-proline. Its function is as follows. Catalyzes the epimerization of trans-4-hydroxy-L-proline (t4LHyp) to cis-4-hydroxy-D-proline (c4DHyp). Is likely involved in a degradation pathway that converts t4LHyp to alpha-ketoglutarate. Displays no proline racemase activity. This chain is 4-hydroxyproline 2-epimerase 2, found in Rhizobium rhizogenes (strain K84 / ATCC BAA-868) (Agrobacterium radiobacter).